Here is a 106-residue protein sequence, read N- to C-terminus: Thioredoxin (106 aa).

A Thioredoxin domain is found at 2–106 (SHYIELTEEN…LKEQLNKLLG (105 aa)). Cysteines 30 and 33 form a disulfide.

It belongs to the thioredoxin family.

Participates in various redox reactions through the reversible oxidation of its active center dithiol to a disulfide and catalyzes dithiol-disulfide exchange reactions. This chain is Thioredoxin (trxA), found in Helicobacter pylori (strain J99 / ATCC 700824) (Campylobacter pylori J99).